Here is a 3227-residue protein sequence, read N- to C-terminus: E3 ubiquitin-protein ligase ptr1 (3227 aa).

Disordered regions lie at residues 1806–1836, 1869–1894, 1908–1929, and 2577–2607; these read SGAAQDSMGDQSLSSSSEESSDSDREEPPDL, MEFEDDQSGSADSVVSEDDADDVMYS, QDASSQNDDSSFDEASSHGDVI, and ATTGYTNDQDSRGSTVPKQDPGTTASRKDKK. Low complexity predominate over residues 1811 to 1823; it reads DSMGDQSLSSSSE. Acidic residues predominate over residues 1883–1894; that stretch reads VSEDDADDVMYS. Over residues 2577-2601 the composition is skewed to polar residues; sequence ATTGYTNDQDSRGSTVPKQDPGTTA. The region spanning 2891 to 3227 is the HECT domain; that stretch reads DADEVKFSKL…NEGSEGFGFA (337 aa). Catalysis depends on cysteine 3194, which acts as the Glycyl thioester intermediate.

This sequence belongs to the UPL family. TOM1/PTR1 subfamily.

The protein localises to the nucleus. The enzyme catalyses S-ubiquitinyl-[E2 ubiquitin-conjugating enzyme]-L-cysteine + [acceptor protein]-L-lysine = [E2 ubiquitin-conjugating enzyme]-L-cysteine + N(6)-ubiquitinyl-[acceptor protein]-L-lysine.. Its pathway is protein modification; protein ubiquitination. Its function is as follows. Probable ubiquitin ligase protein involved in mRNA export. E3 ubiquitin ligase proteins mediate ubiquitination and subsequent proteasomal degradation of target proteins. Probably participates in mRNA export from the nucleus by regulating the transport of hnRNP proteins such as rae1. The sequence is that of E3 ubiquitin-protein ligase ptr1 (ptr1) from Schizosaccharomyces pombe (strain 972 / ATCC 24843) (Fission yeast).